Reading from the N-terminus, the 143-residue chain is Large ribosomal subunit protein uL15 (143 aa).

2 stretches are compositionally biased toward basic residues: residues 1 to 13 and 23 to 38; these read MIRK…KMRG and KKHR…GNAG. Residues 1-38 are disordered; the sequence is MIRKSKKITKMRGSRTCGYGEAKKHRGAGHRGGRGNAG.

It belongs to the universal ribosomal protein uL15 family. Part of the 50S ribosomal subunit.

Functionally, binds to the 23S rRNA. This Methanococcus maripaludis (strain C5 / ATCC BAA-1333) protein is Large ribosomal subunit protein uL15.